A 567-amino-acid chain; its full sequence is Proline--tRNA ligase (567 aa).

It belongs to the class-II aminoacyl-tRNA synthetase family. ProS type 1 subfamily. In terms of assembly, homodimer.

It is found in the cytoplasm. It carries out the reaction tRNA(Pro) + L-proline + ATP = L-prolyl-tRNA(Pro) + AMP + diphosphate. Its function is as follows. Catalyzes the attachment of proline to tRNA(Pro) in a two-step reaction: proline is first activated by ATP to form Pro-AMP and then transferred to the acceptor end of tRNA(Pro). As ProRS can inadvertently accommodate and process non-cognate amino acids such as alanine and cysteine, to avoid such errors it has two additional distinct editing activities against alanine. One activity is designated as 'pretransfer' editing and involves the tRNA(Pro)-independent hydrolysis of activated Ala-AMP. The other activity is designated 'posttransfer' editing and involves deacylation of mischarged Ala-tRNA(Pro). The misacylated Cys-tRNA(Pro) is not edited by ProRS. This chain is Proline--tRNA ligase, found in Idiomarina loihiensis (strain ATCC BAA-735 / DSM 15497 / L2-TR).